Reading from the N-terminus, the 261-residue chain is Phosphonates import ATP-binding protein PhnC (261 aa).

Residues 15-257 (LCLENTSAVY…LERSAIPPKR (243 aa)) form the ABC transporter domain. 48–55 (GPSGSGKS) is an ATP binding site.

This sequence belongs to the ABC transporter superfamily. Phosphonates importer (TC 3.A.1.9.1) family. The complex is composed of two ATP-binding proteins (PhnC), two transmembrane proteins (PhnE) and a solute-binding protein (PhnD).

The protein localises to the cell inner membrane. It catalyses the reaction phosphonate(out) + ATP + H2O = phosphonate(in) + ADP + phosphate + H(+). In terms of biological role, part of the ABC transporter complex PhnCDE involved in phosphonates import. Responsible for energy coupling to the transport system. The sequence is that of Phosphonates import ATP-binding protein PhnC from Hyphomonas neptunium (strain ATCC 15444).